The sequence spans 323 residues: Methenyltetrahydromethanopterin cyclohydrolase (323 aa).

This sequence belongs to the MCH family.

It is found in the cytoplasm. It carries out the reaction 5,10-methenyl-5,6,7,8-tetrahydromethanopterin + H2O = N(5)-formyl-5,6,7,8-tetrahydromethanopterin + H(+). Its pathway is one-carbon metabolism; methanogenesis from CO(2); 5,10-methenyl-5,6,7,8-tetrahydromethanopterin from CO(2): step 3/3. Its function is as follows. Catalyzes the reversible interconversion of 5-formyl-H(4)MPT to methenyl-H(4)MPT(+). The chain is Methenyltetrahydromethanopterin cyclohydrolase (mch) from Methanocaldococcus jannaschii (strain ATCC 43067 / DSM 2661 / JAL-1 / JCM 10045 / NBRC 100440) (Methanococcus jannaschii).